Consider the following 132-residue polypeptide: Small ribosomal subunit protein uS11c (132 aa).

Belongs to the universal ribosomal protein uS11 family. Part of the 30S ribosomal subunit.

It localises to the plastid. The protein localises to the chloroplast. The polypeptide is Small ribosomal subunit protein uS11c (Gnetum parvifolium (Small-leaved jointfir)).